The chain runs to 396 residues: OTU domain-containing protein 3 (396 aa).

The interval 1–49 is disordered; the sequence is MSRKQAAKSRPGSGGRRAEAERKRDERAARRALAKERRNRPDPGGSGCE. Positions 16-41 are enriched in basic and acidic residues; it reads RRAEAERKRDERAARRALAKERRNRP. An OTU domain is found at 64-188; that stretch reads LKLREVPGDG…GEHYDSVRRI (125 aa). An N6-acetyllysine modification is found at Lys-65. The segment at 69-75 is cys-loop; sequence VPGDGNC. Asp-72 is an active-site residue. Cys-75 serves as the catalytic Nucleophile. 2 positions are modified to N6-acetyllysine: Lys-121 and Lys-128. The tract at residues 126–136 is variable-loop; the sequence is LSKPGTFAGND. The tract at residues 176–181 is his-loop; sequence YRYGEH. His-181 is an active-site residue. At Lys-219 the chain carries N6-acetyllysine. Residues 229 to 269 enclose the UBA-like domain; it reads DDVEDAVHKVGSATGCTDFNLIVQNLEAENYNIKSAITALL. The interval 275–381 is disordered; sequence TGNDAEENHE…RDTGRSEADM (107 aa). Composition is skewed to basic and acidic residues over residues 280-301, 312-331, and 343-379; these read EENHEPGDRVKQRGPSREEAGS, NEGRMETSEARASPAEESKA, and QRREQQRLEKKKRQEERHRLKALENRNGSRDTGRSEA. The residue at position 290 (Lys-290) is an N6-acetyllysine.

Glucose and fatty acids stimulate CREBBP-dependent acetylation, promoting its nuclear translocation.

It is found in the cytoplasm. It localises to the nucleus. It carries out the reaction Thiol-dependent hydrolysis of ester, thioester, amide, peptide and isopeptide bonds formed by the C-terminal Gly of ubiquitin (a 76-residue protein attached to proteins as an intracellular targeting signal).. Its function is as follows. Deubiquitinating enzyme that hydrolyzes 'Lys-6'- and 'Lys-11'-linked polyubiquitin. Also hydrolyzes heterotypic (mixed and branched) and homotypic chains. Important regulator of energy metabolism. Glucose and fatty acids trigger its nuclear translocation by CBP-dependent acetylation. In the nucleus, deubiquitinates and stabilizes the nuclear receptor PPARD regulating the expression of various genes involved in glucose and lipid metabolism and oxidative phosphorylation. Also acts as a negative regulator of the ribosome quality control (RQC) by mediating deubiquitination of 40S ribosomal proteins RPS10/eS10 and RPS20/uS10, thereby antagonizing ZNF598-mediated 40S ubiquitination. This Mus musculus (Mouse) protein is OTU domain-containing protein 3 (Otud3).